The sequence spans 35 residues: Photosystem II reaction center protein M (35 aa).

Residues 5-25 (ILAFVATALFILIPTAFLLIL) traverse the membrane as a helical segment.

Belongs to the PsbM family. PSII is composed of 1 copy each of membrane proteins PsbA, PsbB, PsbC, PsbD, PsbE, PsbF, PsbH, PsbI, PsbJ, PsbK, PsbL, PsbM, PsbT, PsbX, PsbY, PsbZ, Psb30/Ycf12, at least 3 peripheral proteins of the oxygen-evolving complex and a large number of cofactors. It forms dimeric complexes.

It is found in the plastid. It localises to the chloroplast thylakoid membrane. One of the components of the core complex of photosystem II (PSII). PSII is a light-driven water:plastoquinone oxidoreductase that uses light energy to abstract electrons from H(2)O, generating O(2) and a proton gradient subsequently used for ATP formation. It consists of a core antenna complex that captures photons, and an electron transfer chain that converts photonic excitation into a charge separation. This subunit is found at the monomer-monomer interface. This Adiantum capillus-veneris (Maidenhair fern) protein is Photosystem II reaction center protein M.